The following is a 406-amino-acid chain: Succinylornithine transaminase (406 aa).

Lys-252 is modified (N6-(pyridoxal phosphate)lysine).

This sequence belongs to the class-III pyridoxal-phosphate-dependent aminotransferase family. AstC subfamily. The cofactor is pyridoxal 5'-phosphate.

The catalysed reaction is N(2)-succinyl-L-ornithine + 2-oxoglutarate = N-succinyl-L-glutamate 5-semialdehyde + L-glutamate. It participates in amino-acid degradation; L-arginine degradation via AST pathway; L-glutamate and succinate from L-arginine: step 3/5. Functionally, catalyzes the transamination of N(2)-succinylornithine and alpha-ketoglutarate into N(2)-succinylglutamate semialdehyde and glutamate. Can also act as an acetylornithine aminotransferase. The chain is Succinylornithine transaminase from Shigella sonnei (strain Ss046).